The chain runs to 274 residues: Aliphatic sulfonates import ATP-binding protein SsuB 2 (274 aa).

The 222-residue stretch at 21 to 242 (LALRGVARRF…SRGSARLAAL (222 aa)) folds into the ABC transporter domain. 53–60 (GRSGCGKS) lines the ATP pocket.

It belongs to the ABC transporter superfamily. Aliphatic sulfonates importer (TC 3.A.1.17.2) family. As to quaternary structure, the complex is composed of two ATP-binding proteins (SsuB), two transmembrane proteins (SsuC) and a solute-binding protein (SsuA).

The protein localises to the cell inner membrane. The enzyme catalyses ATP + H2O + aliphatic sulfonate-[sulfonate-binding protein]Side 1 = ADP + phosphate + aliphatic sulfonateSide 2 + [sulfonate-binding protein]Side 1.. In terms of biological role, part of the ABC transporter complex SsuABC involved in aliphatic sulfonates import. Responsible for energy coupling to the transport system. This Pseudomonas aeruginosa (strain UCBPP-PA14) protein is Aliphatic sulfonates import ATP-binding protein SsuB 2.